The chain runs to 613 residues: Dihydroxy-acid dehydratase (613 aa).

Asp-81 contributes to the Mg(2+) binding site. A [2Fe-2S] cluster-binding site is contributed by Cys-122. Positions 123 and 124 each coordinate Mg(2+). N6-carboxylysine is present on Lys-124. Cys-195 is a binding site for [2Fe-2S] cluster. Glu-491 lines the Mg(2+) pocket. Residue Ser-517 is the Proton acceptor of the active site.

It belongs to the IlvD/Edd family. As to quaternary structure, homodimer. It depends on [2Fe-2S] cluster as a cofactor. Mg(2+) is required as a cofactor.

The catalysed reaction is (2R)-2,3-dihydroxy-3-methylbutanoate = 3-methyl-2-oxobutanoate + H2O. The enzyme catalyses (2R,3R)-2,3-dihydroxy-3-methylpentanoate = (S)-3-methyl-2-oxopentanoate + H2O. It participates in amino-acid biosynthesis; L-isoleucine biosynthesis; L-isoleucine from 2-oxobutanoate: step 3/4. Its pathway is amino-acid biosynthesis; L-valine biosynthesis; L-valine from pyruvate: step 3/4. Functionally, functions in the biosynthesis of branched-chain amino acids. Catalyzes the dehydration of (2R,3R)-2,3-dihydroxy-3-methylpentanoate (2,3-dihydroxy-3-methylvalerate) into 2-oxo-3-methylpentanoate (2-oxo-3-methylvalerate) and of (2R)-2,3-dihydroxy-3-methylbutanoate (2,3-dihydroxyisovalerate) into 2-oxo-3-methylbutanoate (2-oxoisovalerate), the penultimate precursor to L-isoleucine and L-valine, respectively. In Photobacterium profundum (strain SS9), this protein is Dihydroxy-acid dehydratase.